A 137-amino-acid chain; its full sequence is Large ribosomal subunit protein uL16 (137 aa).

The protein belongs to the universal ribosomal protein uL16 family. Part of the 50S ribosomal subunit.

Binds 23S rRNA and is also seen to make contacts with the A and possibly P site tRNAs. In Beijerinckia indica subsp. indica (strain ATCC 9039 / DSM 1715 / NCIMB 8712), this protein is Large ribosomal subunit protein uL16.